Reading from the N-terminus, the 234-residue chain is Cyclin-J18 (234 aa).

Belongs to the cyclin family.

The polypeptide is Cyclin-J18 (CYCJ18) (Arabidopsis thaliana (Mouse-ear cress)).